Consider the following 280-residue polypeptide: Pantothenate synthetase (280 aa).

26–33 (MGNLHEGH) provides a ligand contact to ATP. H33 functions as the Proton donor in the catalytic mechanism. (R)-pantoate is bound at residue Q57. Q57 is a beta-alanine binding site. Residue 145 to 148 (GKKD) participates in ATP binding. Residue Q151 participates in (R)-pantoate binding. Residues V174 and 182–185 (LSSR) each bind ATP.

It belongs to the pantothenate synthetase family. Homodimer.

Its subcellular location is the cytoplasm. It catalyses the reaction (R)-pantoate + beta-alanine + ATP = (R)-pantothenate + AMP + diphosphate + H(+). It participates in cofactor biosynthesis; (R)-pantothenate biosynthesis; (R)-pantothenate from (R)-pantoate and beta-alanine: step 1/1. In terms of biological role, catalyzes the condensation of pantoate with beta-alanine in an ATP-dependent reaction via a pantoyl-adenylate intermediate. The sequence is that of Pantothenate synthetase from Bordetella bronchiseptica (strain ATCC BAA-588 / NCTC 13252 / RB50) (Alcaligenes bronchisepticus).